The chain runs to 353 residues: tRNA N6-adenosine threonylcarbamoyltransferase (353 aa).

The Fe cation site is built by H109 and H113. Residues T136–G140, D169, G182, D186, and N284 each bind substrate. D312 provides a ligand contact to Fe cation.

It belongs to the KAE1 / TsaD family. It depends on Fe(2+) as a cofactor.

The protein localises to the cytoplasm. It catalyses the reaction L-threonylcarbamoyladenylate + adenosine(37) in tRNA = N(6)-L-threonylcarbamoyladenosine(37) in tRNA + AMP + H(+). In terms of biological role, required for the formation of a threonylcarbamoyl group on adenosine at position 37 (t(6)A37) in tRNAs that read codons beginning with adenine. Is involved in the transfer of the threonylcarbamoyl moiety of threonylcarbamoyl-AMP (TC-AMP) to the N6 group of A37, together with TsaE and TsaB. TsaD likely plays a direct catalytic role in this reaction. In Chlorobium phaeobacteroides (strain DSM 266 / SMG 266 / 2430), this protein is tRNA N6-adenosine threonylcarbamoyltransferase.